The primary structure comprises 733 residues: Protein psiM (733 aa).

Positions 1–26 (MKKINNNKIFVLFLTILLYLLNITTA) are cleaved as a signal peptide. 3 N-linked (GlcNAc...) asparagine glycosylation sites follow: Asn22, Asn65, and Asn96. At 27–672 (QKPVSINIKI…VCQKAALVST (646 aa)) the chain is on the extracellular side. Residues 114–260 (NYDSDSGNYI…YDYCGVCNGD (147 aa)) enclose the PA14 domain. Residues Asn277, Asn336, Asn379, Asn428, Asn471, Asn537, Asn573, and Asn641 are each glycosylated (N-linked (GlcNAc...) asparagine). A helical membrane pass occupies residues 673–693 (AVIASVVVVGAVVLGAAIFAG). Topologically, residues 694–733 (KKGYDAWKTSQGNVMAASQANPLYTQSSNGGENPLYNSPT) are cytoplasmic.

The protein belongs to the prespore-cell-inducing factor family.

Its subcellular location is the membrane. This chain is Protein psiM (psiM), found in Dictyostelium discoideum (Social amoeba).